A 324-amino-acid chain; its full sequence is Malate dehydrogenase (324 aa).

Residues glycine 7–glycine 13 and aspartate 34 contribute to the NAD(+) site. Substrate-binding residues include arginine 88 and arginine 94. NAD(+) contacts are provided by residues asparagine 101 and valine 124–asparagine 126. The substrate site is built by asparagine 126 and arginine 160. Catalysis depends on histidine 184, which acts as the Proton acceptor. NAD(+) is bound at residue methionine 238.

Belongs to the LDH/MDH superfamily. MDH type 1 family. Homodimer.

The catalysed reaction is (S)-malate + NAD(+) = oxaloacetate + NADH + H(+). In terms of biological role, catalyzes the reversible oxidation of malate to oxaloacetate. This Haemophilus ducreyi (strain 35000HP / ATCC 700724) protein is Malate dehydrogenase.